Reading from the N-terminus, the 1203-residue chain is Probable phospholipid-transporting ATPase 11 (1203 aa).

The Cytoplasmic portion of the chain corresponds to 1–71 (MTKCRRRRLH…STKYTLASFI (71 aa)). The chain crosses the membrane as a helical span at residues 72-93 (PKSLFEQFRRVANFYFLVTGVL). Over 94 to 97 (SLTA) the chain is Extracellular. Residues 98 to 120 (LSPYSPISALLPLTFVIAASMVK) form a helical membrane-spanning segment. Over 121–303 (EAIEDWGRKK…SRIERKMDKI (183 aa)) the chain is Cytoplasmic. The chain crosses the membrane as a helical span at residues 304 to 325 (IYLMFGVVFLMSFIGSIVFGIE). Over 326 to 363 (TREDRVRNGGRTERWYLRPDNADIFFDPDRAPMAAVYH) the chain is Extracellular. The chain crosses the membrane as a helical span at residues 364–381 (FFTAVMLYSYFIPISLYV). At 382–921 (SIEIVKVLQS…HGHWCYSRIS (540 aa)) the chain is on the cytoplasmic side. The active-site 4-aspartylphosphate intermediate is Asp429. Residues Asp866 and Asp870 each coordinate Mg(2+). A helical transmembrane segment spans residues 922–941 (SMICYFFYKNITFGVTVFLY). Residues 942–955 (EAYTSFSAQPAYND) are Extracellular-facing. Residues 956 to 975 (WFLSLFNVFFSSLPVIALGV) traverse the membrane as a helical segment. At 976–1005 (FDQDVSARYCYKFPLLYQEGVQNLLFSWKR) the chain is on the cytoplasmic side. A helical membrane pass occupies residues 1006 to 1028 (IIGWMFNGVFTALAIFFLCKESL). Topologically, residues 1029-1041 (KHQLYNPNGKTAG) are extracellular. A helical transmembrane segment spans residues 1042–1064 (REILGGTMYTCVVWVVNLQMALA). Topologically, residues 1065–1070 (ISYFTW) are cytoplasmic. A helical transmembrane segment spans residues 1071–1091 (LQHIVIWGSVAFWYIFLMIYG). Over 1092–1108 (AITPSFSTDAYKVFIEA) the chain is Extracellular. Residues 1109 to 1133 (LAPAPSYWLTTLFVMFFALIPFFVF) traverse the membrane as a helical segment. Residues 1134–1203 (KSVQMRFFPG…DQLNKNFIAF (70 aa)) lie on the Cytoplasmic side of the membrane.

Belongs to the cation transport ATPase (P-type) (TC 3.A.3) family. Type IV subfamily.

The protein resides in the membrane. It catalyses the reaction ATP + H2O + phospholipidSide 1 = ADP + phosphate + phospholipidSide 2.. Functionally, involved in transport of phospholipids. The sequence is that of Probable phospholipid-transporting ATPase 11 from Arabidopsis thaliana (Mouse-ear cress).